Here is a 127-residue protein sequence, read N- to C-terminus: MAYRKLGRDSAHRKAMLREMTTQLIMNERIVTTETRAKEIRKTTEKMITLGKRGDLSARRKAAAFVRNEIADIHEEKDAVVVKSALQKLFSDIAPRYKDRNGGYTRMYKLANPRKGDAAPMVIIELV.

This sequence belongs to the bacterial ribosomal protein bL17 family. In terms of assembly, part of the 50S ribosomal subunit. Contacts protein L32.

This chain is Large ribosomal subunit protein bL17, found in Lactobacillus johnsonii (strain CNCM I-12250 / La1 / NCC 533).